A 382-amino-acid polypeptide reads, in one-letter code: Cytochrome c biogenesis CcmF N-terminal-like mitochondrial protein 1 (382 aa).

4 consecutive transmembrane segments (helical) span residues Met1–Phe21, Ala30–Cys50, His79–Tyr99, and Ser117–Tyr137.

This sequence belongs to the CcmF/CycK/Ccl1/NrfE/CcsA family. Interacts with CCMFN2 and CCMH.

Its subcellular location is the mitochondrion inner membrane. Its function is as follows. Forms a complex with CCMFC, CCMFN2 and CCMH that performs the assembly of heme with c-type apocytochromes in mitochondria. The sequence is that of Cytochrome c biogenesis CcmF N-terminal-like mitochondrial protein 1 from Arabidopsis thaliana (Mouse-ear cress).